Consider the following 241-residue polypeptide: Methylthioribulose-1-phosphate dehydratase (241 aa).

Position 96 (C96) interacts with substrate. The Zn(2+) site is built by H114 and H116. E138 functions as the Proton donor/acceptor in the catalytic mechanism. H194 serves as a coordination point for Zn(2+).

It belongs to the aldolase class II family. MtnB subfamily. Homotetramer. Interacts with APAF1. May interact with CASP1. Requires Zn(2+) as cofactor. As to expression, expressed in skeletal muscle (at protein level).

It is found in the cytoplasm. The enzyme catalyses 5-(methylsulfanyl)-D-ribulose 1-phosphate = 5-methylsulfanyl-2,3-dioxopentyl phosphate + H2O. The protein operates within amino-acid biosynthesis; L-methionine biosynthesis via salvage pathway; L-methionine from S-methyl-5-thio-alpha-D-ribose 1-phosphate: step 2/6. Functionally, catalyzes the dehydration of methylthioribulose-1-phosphate (MTRu-1-P) into 2,3-diketo-5-methylthiopentyl-1-phosphate (DK-MTP-1-P). Functions in the methionine salvage pathway, which plays a key role in cancer, apoptosis, microbial proliferation and inflammation. May inhibit the CASP1-related inflammatory response (pyroptosis), the CASP9-dependent apoptotic pathway and the cytochrome c-dependent and APAF1-mediated cell death. The polypeptide is Methylthioribulose-1-phosphate dehydratase (Mus musculus (Mouse)).